A 156-amino-acid polypeptide reads, in one-letter code: Small ribosomal subunit protein uS7 (156 aa).

Belongs to the universal ribosomal protein uS7 family. As to quaternary structure, part of the 30S ribosomal subunit. Contacts proteins S9 and S11.

Functionally, one of the primary rRNA binding proteins, it binds directly to 16S rRNA where it nucleates assembly of the head domain of the 30S subunit. Is located at the subunit interface close to the decoding center, probably blocks exit of the E-site tRNA. The sequence is that of Small ribosomal subunit protein uS7 from Acidithiobacillus ferrooxidans (strain ATCC 53993 / BNL-5-31) (Leptospirillum ferrooxidans (ATCC 53993)).